A 781-amino-acid chain; its full sequence is Probable beta-D-xylosidase 5 (781 aa).

Residues 1 to 23 form the signal peptide; sequence MSIRRFVRLSLLIIALVSSLCES. N-linked (GlcNAc...) asparagine glycosylation is found at asparagine 43, asparagine 103, and asparagine 123. Residue aspartate 291 is part of the active site. 6 N-linked (GlcNAc...) asparagine glycosylation sites follow: asparagine 342, asparagine 424, asparagine 504, asparagine 543, asparagine 601, and asparagine 653.

The protein belongs to the glycosyl hydrolase 3 family.

The protein resides in the secreted. It is found in the extracellular space. Its subcellular location is the extracellular matrix. In Arabidopsis thaliana (Mouse-ear cress), this protein is Probable beta-D-xylosidase 5 (BXL5).